The sequence spans 211 residues: Protein-L-isoaspartate O-methyltransferase (211 aa).

Residue S60 is part of the active site.

This sequence belongs to the methyltransferase superfamily. L-isoaspartyl/D-aspartyl protein methyltransferase family.

Its subcellular location is the cytoplasm. It carries out the reaction [protein]-L-isoaspartate + S-adenosyl-L-methionine = [protein]-L-isoaspartate alpha-methyl ester + S-adenosyl-L-homocysteine. Its function is as follows. Catalyzes the methyl esterification of L-isoaspartyl residues in peptides and proteins that result from spontaneous decomposition of normal L-aspartyl and L-asparaginyl residues. It plays a role in the repair and/or degradation of damaged proteins. The polypeptide is Protein-L-isoaspartate O-methyltransferase (Hahella chejuensis (strain KCTC 2396)).